The chain runs to 289 residues: MSNLINIKNRINVVTNTRKITNAMQLVSTSKLHRIINLTKNIKAYQNLVETTFDNIVSKITQEELNEIFPPKQETDATLYIIVTSDIGLCGSYNSNVINELKKVIKPSDLVITLGTKGLNWIRVSKFKDQLYKAYVNLEDKLDYSIATEIGNLNFELFAKNKISSCKIIYTKFVNNLIQEVSVKQLFPYDSSHLEIKKESEQMEGDIEFEPSAEIILQRAFPLYVSSMIYVLVSLSKVSELASRRVAMESATDNADEIINDLNLEYNSKRQSVITQEITEIVAGAQATN.

Belongs to the ATPase gamma chain family. In terms of assembly, F-type ATPases have 2 components, CF(1) - the catalytic core - and CF(0) - the membrane proton channel. CF(1) has five subunits: alpha(3), beta(3), gamma(1), delta(1), epsilon(1). CF(0) has three main subunits: a, b and c.

It localises to the cell membrane. Functionally, produces ATP from ADP in the presence of a proton gradient across the membrane. The gamma chain is believed to be important in regulating ATPase activity and the flow of protons through the CF(0) complex. The protein is ATP synthase gamma chain of Mycoplasmopsis synoviae (strain 53) (Mycoplasma synoviae).